We begin with the raw amino-acid sequence, 459 residues long: Trichothecene 3-O-acetyltransferase TRI101 (459 aa).

Residues Asp218 and Ile221 each coordinate Ca(2+). CoA contacts are provided by residues Lys253, 266 to 269, Asp302, Gln318, and Arg343; that span reads FVST. Asp376 serves as a coordination point for Ca(2+). CoA is bound by residues Ser386 and Lys390. Glu449 is a binding site for Ca(2+).

This sequence belongs to the trichothecene 3-O-acetyltransferase family.

Its pathway is sesquiterpene biosynthesis; trichothecene biosynthesis. Functionally, 3-O-acetyltransferase involved in the biosynthesis of trichothecenes, a very large family of chemically related bicyclic sesquiterpene compounds acting as mycotoxins, including T2-toxin. The biosynthesis of trichothecenes begins with the cyclization of farnesyl diphosphate to trichodiene and is catalyzed by the trichodiene synthase TRI5. Trichodiene undergoes a series of oxygenations catalyzed by the cytochrome P450 monooxygenase TRI4. TRI4 controls the addition of four oxygens at C-2, C-3, C-11, and the C-12, C-13-epoxide to form the intermediate isotrichotriol. Isotrichotriol then undergoes a non-enzymatic isomerization and cyclization to form isotrichodermol. During this process, the oxygen at the C-2 position becomes the pyran ring oxygen and the hydroxyl group at C-11 is lost. More complex type A trichothecenes are built by modifying isotrichodermol through a series of paired hydroxylation and acetylation or acylation steps. Isotrichodermol is converted to isotrichodermin by the acetyltransferase TRI101. TRI101 encodes a C-3 transacetylase that acts as a self-protection or resistance factor during biosynthesis and that the presence of a free C-3 hydroxyl group is a key component of Fusarium trichothecene phytotoxicity. A second hydroxyl group is added to C-15 by the trichothecene C-15 hydroxylase TRI11, producing 15-decalonectrin, which is then acetylated by TRI3, producing calonectrin. A third hydroxyl group is added at C-4 by the cytochrome P450 monooxygenase TRI13, converting calonectrin to 3,15-diacetoxyspirpenol, which is subsequently acetylated bythe acetyltransferase TRI7. A fourth hydroxyl group is added to C-8 by the cytochrome P450 monooxygenase TRI1, followed by the addition of an isovaleryl moiety by TRI16. Finally, the acetyl group is removed from the C-3 position by the trichothecene C-3 esterase TRI8 to produce T-2 toxin. This Fusarium sporotrichioides protein is Trichothecene 3-O-acetyltransferase TRI101.